The primary structure comprises 400 residues: Elongation factor Tu (400 aa).

One can recognise a tr-type G domain in the interval 10 to 209 (KPHVNIGTIG…EVDNYIPTPE (200 aa)). The G1 stretch occupies residues 19–26 (GHVDHGKT). 19 to 26 (GHVDHGKT) contacts GTP. Threonine 26 lines the Mg(2+) pocket. The G2 stretch occupies residues 60–64 (GITIN). Positions 81-84 (DCPG) are G3. Residues 81 to 85 (DCPGH) and 136 to 139 (NKCD) each bind GTP. Residues 136–139 (NKCD) form a G4 region. Residues 174 to 176 (SAL) are G5.

The protein belongs to the TRAFAC class translation factor GTPase superfamily. Classic translation factor GTPase family. EF-Tu/EF-1A subfamily. Monomer.

It localises to the cytoplasm. It carries out the reaction GTP + H2O = GDP + phosphate + H(+). GTP hydrolase that promotes the GTP-dependent binding of aminoacyl-tRNA to the A-site of ribosomes during protein biosynthesis. The chain is Elongation factor Tu from Ruminiclostridium cellulolyticum (strain ATCC 35319 / DSM 5812 / JCM 6584 / H10) (Clostridium cellulolyticum).